The primary structure comprises 399 residues: O-antigen polymerase (399 aa).

10 helical membrane passes run 4 to 24, 37 to 57, 64 to 84, 97 to 117, 151 to 171, 185 to 205, 222 to 242, 309 to 329, 353 to 373, and 374 to 394; these read FPPG…LVLV, LVFT…LTIF, AIMG…LVIL, IVCY…IDVL, GGFS…LLCM, IISF…AILV, FCGI…TNIF, FFWI…IYLA, LYFL…APSS, and STFS…KLTN.

Its subcellular location is the cell inner membrane. The catalysed reaction is n lipid-linked O-antigen repeat units = a lipid-linked O antigen + (n-1) polyisoprenyl diphosphate.. Its pathway is bacterial outer membrane biogenesis; LPS O-antigen biosynthesis. In terms of biological role, polymerase involved in the biosynthesis of the lipopolysaccharide (LPS). Catalyzes the polymerization of the O-antigen repeat units on the periplasmic face of the inner membrane, leading to the formation of the lipid-linked O-antigen molecule. The polypeptide is O-antigen polymerase (Salmonella muenchen).